Reading from the N-terminus, the 387-residue chain is GTPase Obg (387 aa).

One can recognise an Obg domain in the interval 1-159; sequence MKFVDEAIIR…RSLKLELLLL (159 aa). One can recognise an OBG-type G domain in the interval 160 to 333; sequence ADVGLLGMPN…LALKLLDFID (174 aa). Residues 166–173, 191–195, 213–216, 283–286, and 314–316 contribute to the GTP site; these read GMPNAGKS, FTTLV, DIPG, NKAD, and SAY. Residues Ser173 and Thr193 each coordinate Mg(2+).

Belongs to the TRAFAC class OBG-HflX-like GTPase superfamily. OBG GTPase family. Monomer. Requires Mg(2+) as cofactor.

The protein resides in the cytoplasm. In terms of biological role, an essential GTPase which binds GTP, GDP and possibly (p)ppGpp with moderate affinity, with high nucleotide exchange rates and a fairly low GTP hydrolysis rate. Plays a role in control of the cell cycle, stress response, ribosome biogenesis and in those bacteria that undergo differentiation, in morphogenesis control. The sequence is that of GTPase Obg from Shewanella pealeana (strain ATCC 700345 / ANG-SQ1).